We begin with the raw amino-acid sequence, 487 residues long: Protein nucleotidyltransferase YdiU (487 aa).

Positions 90, 92, 93, 113, 125, 126, 176, and 183 each coordinate ATP. Asp252 serves as the catalytic Proton acceptor. Mg(2+) contacts are provided by Asn253 and Asp262. Asp262 contributes to the ATP binding site.

Belongs to the SELO family. Mg(2+) serves as cofactor. The cofactor is Mn(2+).

The catalysed reaction is L-seryl-[protein] + ATP = 3-O-(5'-adenylyl)-L-seryl-[protein] + diphosphate. The enzyme catalyses L-threonyl-[protein] + ATP = 3-O-(5'-adenylyl)-L-threonyl-[protein] + diphosphate. It catalyses the reaction L-tyrosyl-[protein] + ATP = O-(5'-adenylyl)-L-tyrosyl-[protein] + diphosphate. It carries out the reaction L-histidyl-[protein] + UTP = N(tele)-(5'-uridylyl)-L-histidyl-[protein] + diphosphate. The catalysed reaction is L-seryl-[protein] + UTP = O-(5'-uridylyl)-L-seryl-[protein] + diphosphate. The enzyme catalyses L-tyrosyl-[protein] + UTP = O-(5'-uridylyl)-L-tyrosyl-[protein] + diphosphate. Functionally, nucleotidyltransferase involved in the post-translational modification of proteins. It can catalyze the addition of adenosine monophosphate (AMP) or uridine monophosphate (UMP) to a protein, resulting in modifications known as AMPylation and UMPylation. In Pseudomonas fluorescens (strain ATCC BAA-477 / NRRL B-23932 / Pf-5), this protein is Protein nucleotidyltransferase YdiU.